Consider the following 125-residue polypeptide: uncharacterized protein (125 aa).

3 consecutive transmembrane segments (helical) span residues 20–42 (RNGG…LTIL), 57–76 (LMNA…GVVV), and 81–103 (YLFV…YMAS).

It localises to the cell membrane. This is an uncharacterized protein from Archaeoglobus fulgidus (strain ATCC 49558 / DSM 4304 / JCM 9628 / NBRC 100126 / VC-16).